The chain runs to 191 residues: MLPTAQRRLRGYIRACAPYGRRGEEPVRRRCAFLCARVGHVCVGRSVVQNFVFQDNIYHLARSIDVLYEGLQLNLDECLYAEKVVYDVRFFDHALQKLCAHIDRQSHFPDYLPILHCLFSCGARFLNLLNFLIHRASPVTAQVEFTRMLPFIEKRHSALHENLARSIQEVDTSADASHVVSQDEIDELLEH.

This is an uncharacterized protein from Treponema pallidum (strain Nichols).